The primary structure comprises 269 residues: UPF0329 protein ECU04_1660 (269 aa).

A compositionally biased stretch (basic and acidic residues) spans M1 to S12. Residues M1 to E74 form a disordered region. The span at K13–K23 shows a compositional bias: basic residues. Residues G24 to D36 are compositionally biased toward basic and acidic residues. Residues R37 to V51 show a composition bias toward acidic residues.

The protein belongs to the UPF0329 family.

This is UPF0329 protein ECU04_1660 from Encephalitozoon cuniculi (strain GB-M1) (Microsporidian parasite).